We begin with the raw amino-acid sequence, 341 residues long: Major histocompatibility complex class I-related protein 1 (341 aa).

The first 22 residues, methionine 1–serine 22, serve as a signal peptide directing secretion. The tract at residues arginine 23 to serine 109 is alpha-1. Residues arginine 23 to threonine 201 are antigen-binding cleft. Over arginine 23–methionine 302 the chain is Extracellular. 2 residues coordinate 8-(9H-purin-6-yl)-2-oxa-8-azabicyclo[3.3.1]nona-3,6-diene-4,6-dicarbaldehyde: tyrosine 29 and arginine 31. Residues arginine 31, serine 46, and lysine 65 each coordinate 5-(2-oxoethylideneamino)-6-(D-ribitylamino)uracil. 3 residues coordinate 5-(2-oxopropylideneamino)-6-(D-ribitylamino)uracil: arginine 31, serine 46, and lysine 65. 3 residues coordinate 7-hydroxy-6-methyl-8-(1-D-ribityl)lumazine: arginine 31, serine 46, and lysine 65. 8-(9H-purin-6-yl)-2-oxa-8-azabicyclo[3.3.1]nona-3,6-diene-4,6-dicarbaldehyde is bound by residues lysine 65 and histidine 80. 2-amino-4-oxopteridine-6-carbaldehyde is bound at residue lysine 65. Residue lysine 65 coordinates pyridoxal. A glycan (N-linked (GlcNAc...) asparagine) is linked at asparagine 107. The interval glycine 110–threonine 201 is alpha-2. Arginine 116 is a binding site for 8-(9H-purin-6-yl)-2-oxa-8-azabicyclo[3.3.1]nona-3,6-diene-4,6-dicarbaldehyde. 5-(2-oxoethylideneamino)-6-(D-ribitylamino)uracil is bound by residues arginine 116, tyrosine 174, and glutamine 175. Arginine 116, tyrosine 174, and glutamine 175 together coordinate 5-(2-oxopropylideneamino)-6-(D-ribitylamino)uracil. Arginine 116, tyrosine 174, and glutamine 175 together coordinate 7-hydroxy-6-methyl-8-(1-D-ribityl)lumazine. 2 disulfide bridges follow: cysteine 120-cysteine 183 and cysteine 222-cysteine 278. The interval glutamate 202 to glutamine 293 is alpha-3. In terms of domain architecture, Ig-like C1-type spans proline 203–proline 299. Positions glutamate 294–methionine 302 are connecting peptide. The helical transmembrane segment at lysine 303 to tryptophan 323 threads the bilayer. Topologically, residues arginine 324–arginine 341 are cytoplasmic.

Belongs to the MHC class I family. As to quaternary structure, heterotrimer that consists of MR1, B2M and metabolite antigen. Major classes of metabolite ligands presented by MR1 include riboflavin-related antigens, pyrimidines and ribityl lumazines, nucleobase adducts and folate derivatives. Forms reversible covalent Schiff base complexes with microbial pyrimidine-based metabolite, which serves as a molecular switch triggering complete folding, stable association with B2M and translocation of the ternary complex from endoplasmic reticulum to the plasma membrane. Alternatively, forms non-Schiff base complexes with ribityl lumazines. On antigen-presenting cells, the ternary complex interacts with TCR on MR1-restricted T cells. Interacts with TAPBP and TAPBPL chaperones in the endoplasmic reticulum. TAPBP associated or not with MHC class I peptide loading complex binds ligand-free MR1 or MR1-B2M complex, providing for stable MR1 pools ready for metabolite antigen processing. TAPBPL interacts with MR1 in a ligand-independent way; this interaction may stabilize MR1 pool and facilitate ligand loading and dissociation. Structurally, MR1-B2M heterodimer adopts a topology similar to classical MHC class I molecules, with alpha-1 and alpha-2 domains of MR1 forming the antigen-binding cleft composed of two alpha-helices resting on a floor of 7-stranded anti-parallel beta-pleated sheet. MR1-B2M heterodimer (via alpha-helices) interacts with TCR (via CDR domains). In terms of processing, N-glycosylated.

The protein resides in the cell membrane. It is found in the endoplasmic reticulum membrane. Its subcellular location is the golgi apparatus membrane. It localises to the early endosome membrane. The protein localises to the late endosome membrane. Functionally, antigen-presenting molecule specialized in displaying microbial pyrimidine-based metabolites to alpha-beta T cell receptors (TCR) on innate-type mucosal-associated invariant T (MAIT) cells. In complex with B2M preferentially presents riboflavin-derived metabolites to semi-invariant TCRs on MAIT cells, guiding immune surveillance of the microbial metabolome at mucosal epithelial barriers. Signature pyrimidine-based microbial antigens are generated via non-enzymatic condensation of metabolite intermediates of the riboflavin pathway with by-products arising from other metabolic pathways such as glycolysis. Typical potent antigenic metabolites are 5-(2-oxoethylideneamino)-6-D-ribitylaminouracil (5-OE-RU) and 5-(2-oxopropylideneamino)-6-D-ribitylaminouracil (5-OP-RU), products of condensation of 5-amino-6-D-ribityaminouracil (5-A-RU) with glyoxal or methylglyoxal by-products, respectively. May present microbial antigens to various MAIT cell subsets, providing for unique recognition of diverse microbes, including pathogens that do not synthesize riboflavin. Upon antigen recognition, elicits rapid innate-type MAIT cell activation to eliminate pathogenic microbes by directly killing infected cells. During T cell development, drives thymic selection and post-thymic terminal differentiation of MAIT cells in a process dependent on commensal microflora. Acts as an immune sensor of cancer cell metabolome. May present a tumor-specific or -associated metabolite essential for cancer cell survival to a pan-cancer TCR on a non-MAIT CD8-positive T cell clone, triggering T cell-mediated killing of a wide range of cancer cell types. May present tumor-enriched pyridoxal and pyridoxal 5'-phosphate antigens, enabling preferential recognition of cancer cells. Presents nucleobase carbonyl adducts generated during oxidative stress. Captures M3Ade, a nucleobase adduct composed of one adenine modified by a malondialdehyde trimer, for recognition by MR1-restricted T cell clones expressing a polyclonal TCR repertoire. This Pan troglodytes (Chimpanzee) protein is Major histocompatibility complex class I-related protein 1.